The sequence spans 392 residues: ATP phosphoribosyltransferase regulatory subunit (392 aa).

It belongs to the class-II aminoacyl-tRNA synthetase family. HisZ subfamily. As to quaternary structure, heteromultimer composed of HisG and HisZ subunits.

It localises to the cytoplasm. It functions in the pathway amino-acid biosynthesis; L-histidine biosynthesis; L-histidine from 5-phospho-alpha-D-ribose 1-diphosphate: step 1/9. Its function is as follows. Required for the first step of histidine biosynthesis. May allow the feedback regulation of ATP phosphoribosyltransferase activity by histidine. The sequence is that of ATP phosphoribosyltransferase regulatory subunit from Marinomonas sp. (strain MWYL1).